Consider the following 156-residue polypeptide: Small ribosomal subunit protein uS7 (156 aa).

It belongs to the universal ribosomal protein uS7 family. In terms of assembly, part of the 30S ribosomal subunit. Contacts proteins S9 and S11.

In terms of biological role, one of the primary rRNA binding proteins, it binds directly to 16S rRNA where it nucleates assembly of the head domain of the 30S subunit. Is located at the subunit interface close to the decoding center, probably blocks exit of the E-site tRNA. The polypeptide is Small ribosomal subunit protein uS7 (Bacillus pumilus (strain SAFR-032)).